The following is a 434-amino-acid chain: MSFNTIIDWNSCTAEQQRQLLMRPAISASESITRTVNDILDNVKTRGDEALREYSAKFDKTTVTALKVSADEIAAASERLSDELKQAMAVAVKNIETFHTAQKLPPVDVETQPGVRCQQVTRPVASVGLYIPGGSAPLFSTVLMLATPARIAGCKKVVLCSPPPIADEILYAAQLCGVQDVFNVGGAQAIAALAFGTESVPKVDKIFGPGNAFVTEAKRQVSQRLDGAAIDMPAGPSEVLVIADSGATPDFVASDLLSQAEHGPDSQVILLTPDADMARRVAEAVERQLAELPRAETARQALNASRLIVTKDLAQCVEISNQYGPEHLIIQTRNARELVDGITSAGSVFLGDWSPESAGDYASGTNHVLPTYGYTATCSSLGLADFQKRMTVQELSKEGFSTLASTIETLAAAERLTAHKNAVTLRVNALKEQA.

NAD(+)-binding residues include tyrosine 130, glutamine 188, and asparagine 211. Residues serine 237, glutamine 259, and histidine 262 each coordinate substrate. Zn(2+) contacts are provided by glutamine 259 and histidine 262. Catalysis depends on proton acceptor residues glutamate 326 and histidine 327. 4 residues coordinate substrate: histidine 327, aspartate 360, glutamate 414, and histidine 419. Aspartate 360 is a Zn(2+) binding site. Histidine 419 serves as a coordination point for Zn(2+).

Belongs to the histidinol dehydrogenase family. As to quaternary structure, homodimer. It depends on Zn(2+) as a cofactor.

The enzyme catalyses L-histidinol + 2 NAD(+) + H2O = L-histidine + 2 NADH + 3 H(+). It functions in the pathway amino-acid biosynthesis; L-histidine biosynthesis; L-histidine from 5-phospho-alpha-D-ribose 1-diphosphate: step 9/9. Catalyzes the sequential NAD-dependent oxidations of L-histidinol to L-histidinaldehyde and then to L-histidine. This is Histidinol dehydrogenase from Escherichia coli O6:H1 (strain CFT073 / ATCC 700928 / UPEC).